The primary structure comprises 269 residues: Shikimate dehydrogenase (NADP(+)) (269 aa).

Shikimate-binding positions include 14–16 (SKS) and Thr61. Catalysis depends on Lys65, which acts as the Proton acceptor. NADP(+) is bound at residue Glu77. Residues Asn86 and Asp102 each coordinate shikimate. NADP(+) is bound by residues 126 to 130 (GAGGA), 149 to 154 (NRTLTK), and Met213. A shikimate-binding site is contributed by Tyr215. Gly238 is an NADP(+) binding site.

This sequence belongs to the shikimate dehydrogenase family. In terms of assembly, homodimer.

The catalysed reaction is shikimate + NADP(+) = 3-dehydroshikimate + NADPH + H(+). It participates in metabolic intermediate biosynthesis; chorismate biosynthesis; chorismate from D-erythrose 4-phosphate and phosphoenolpyruvate: step 4/7. Functionally, involved in the biosynthesis of the chorismate, which leads to the biosynthesis of aromatic amino acids. Catalyzes the reversible NADPH linked reduction of 3-dehydroshikimate (DHSA) to yield shikimate (SA). This is Shikimate dehydrogenase (NADP(+)) from Actinobacillus succinogenes (strain ATCC 55618 / DSM 22257 / CCUG 43843 / 130Z).